The chain runs to 334 residues: Malate dehydrogenase 2 (334 aa).

12 to 18 (GAAGRVA) lines the NAD(+) pocket. Positions 93 and 99 each coordinate substrate. Residues N106, Q113, and 130–132 (VGN) contribute to the NAD(+) site. The substrate site is built by N132 and R166. The active-site Proton acceptor is the H191.

The protein belongs to the LDH/MDH superfamily. MDH type 2 family.

The enzyme catalyses (S)-malate + NAD(+) = oxaloacetate + NADH + H(+). Functionally, catalyzes the reversible oxidation of malate to oxaloacetate. The polypeptide is Malate dehydrogenase 2 (Albidiferax ferrireducens (strain ATCC BAA-621 / DSM 15236 / T118) (Rhodoferax ferrireducens)).